Reading from the N-terminus, the 520-residue chain is Nucleolar protein 12 (520 aa).

2 disordered regions span residues 1–29 (MGKKSKSQKEAPATESAGSLPFLGGNVSV) and 41–185 (AGPV…DDDE). Acidic residues predominate over residues 78 to 95 (ASEDQFMEDAPESPDAAE). Residues 120–132 (SYMRRLAKEEQKE) are compositionally biased toward basic and acidic residues. Residues 144–168 (LEEESEDGEKESPQSEDGESEDEGA) are compositionally biased toward acidic residues. RRM domains lie at 191–303 (RTVF…NVAH) and 311–421 (RCVF…RAKK). Residues 472-520 (EGNRATADGSSRIRVRTKSRGSKAKKDSRSKKRAAAYKAAGGKKAKIGK) form a disordered region. Residues 484-520 (IRVRTKSRGSKAKKDSRSKKRAAAYKAAGGKKAKIGK) show a composition bias toward basic residues.

The protein belongs to the RRM RBM34 family.

The protein localises to the nucleus. The protein resides in the nucleolus. Functionally, involved in pre-25S rRNA processing. This Emericella nidulans (strain FGSC A4 / ATCC 38163 / CBS 112.46 / NRRL 194 / M139) (Aspergillus nidulans) protein is Nucleolar protein 12 (nop12).